The sequence spans 213 residues: MSRVSVPCHVKGTVALQVGDVRTSQGRPGVLVIDVTFPSVAPFELQEIMFKNYYTAFLSIRVRQHTSTHTPAKWVTCLRDYCLMPDPHSEEGAQEYVSLFKHQMLCDMARVLELRLILRQPSPLWLSFTVEELQIYQQGPKSPSMTFPKWLSHPVPCEQPAPLIEGLPDPNRVSSEVQQMWALTEMIRASHTSTRIGRFDVDGCYDLNLLSYT.

Part of the neuronal tubulin polyglutamylase complex which contains TPGS1, TPGS2, TTLL1, LRRC49 and NICN1.

The protein resides in the nucleus. The polypeptide is Nicolin-1 (NICN1) (Canis lupus familiaris (Dog)).